The following is a 220-amino-acid chain: Metalloproteinase inhibitor 2 (220 aa).

Residues 1–26 (MGATARSLRLALGLLLLGTLPRGADA) form the signal peptide. Residue C27 coordinates Zn(2+). Involved in metalloproteinase-binding stretches follow at residues 27 to 30 (CSCS) and 95 to 96 (SA). Cystine bridges form between C27-C98, C29-C127, C39-C152, C154-C201, C159-C164, and C172-C193. The 126-residue stretch at 27 to 152 (CSCSPVHPQQ…SLNHRYQMGC (126 aa)) folds into the NTR domain.

This sequence belongs to the protease inhibitor I35 (TIMP) family. As to quaternary structure, interacts (via the C-terminal) with MMP2 (via the C-terminal PEX domain); the interaction inhibits the MMP2 activity. The activity of TIMP2 is dependent on the presence of disulfide bonds. Predominantly expressed in the lung in alveolar macrophages and epithelial cells. Also found in brain, kidney, intestine, spleen and heart.

Its subcellular location is the secreted. In terms of biological role, complexes with metalloproteinases (such as collagenases) and irreversibly inactivates them by binding to their catalytic zinc cofactor. The protein is Metalloproteinase inhibitor 2 (TIMP2) of Cavia porcellus (Guinea pig).